The primary structure comprises 473 residues: Photosystem II CP43 reaction center protein (473 aa).

A propeptide spanning residues 1-14 is cleaved from the precursor; it reads MKTLYSLRRFYHVE. T15 carries the N-acetylthreonine modification. Position 15 is a phosphothreonine (T15). 5 helical membrane-spanning segments follow: residues 69-93, 134-155, 178-200, 255-275, and 291-312; these read LFEV…PHLA, LLGP…KDRN, KALY…RKIT, KPFA…LSYS, and WFNN…ASQA. E367 lines the [CaMn4O5] cluster pocket. The helical transmembrane segment at 447–471 threads the bilayer; the sequence is RARAAAAGFEKGIDRDFEPVLSMTP.

The protein belongs to the PsbB/PsbC family. PsbC subfamily. As to quaternary structure, PSII is composed of 1 copy each of membrane proteins PsbA, PsbB, PsbC, PsbD, PsbE, PsbF, PsbH, PsbI, PsbJ, PsbK, PsbL, PsbM, PsbT, PsbX, PsbY, PsbZ, Psb30/Ycf12, at least 3 peripheral proteins of the oxygen-evolving complex and a large number of cofactors. It forms dimeric complexes. The cofactor is Binds multiple chlorophylls and provides some of the ligands for the Ca-4Mn-5O cluster of the oxygen-evolving complex. It may also provide a ligand for a Cl- that is required for oxygen evolution. PSII binds additional chlorophylls, carotenoids and specific lipids..

It is found in the plastid. Its subcellular location is the chloroplast thylakoid membrane. In terms of biological role, one of the components of the core complex of photosystem II (PSII). It binds chlorophyll and helps catalyze the primary light-induced photochemical processes of PSII. PSII is a light-driven water:plastoquinone oxidoreductase, using light energy to abstract electrons from H(2)O, generating O(2) and a proton gradient subsequently used for ATP formation. This Crucihimalaya wallichii (Rock-cress) protein is Photosystem II CP43 reaction center protein.